The sequence spans 301 residues: Ribosome-inactivating protein (301 aa).

Positions 1–16 are cleaved as a propeptide — or 12 (in 10% of the molecules); sequence MAEITLEPSDLMAQTN. The propeptide occupies 162 to 186; the sequence is MATLEEEEVKMQMQMPEAADLAAAA. Glutamate 207 is a catalytic residue. Residues 258 to 301 constitute a propeptide that is removed on maturation; sequence VIPDMQKLGIKDKNEAARIVALVKNQTTAAAATAASADNDDDEA.

This sequence belongs to the ribosome-inactivating protein family. Type 1 RIP subfamily. In terms of assembly, synthesized and stored in the kernel as a 34 kDa inactive precursor. During germination, this neutral precursor is converted into a basic, active form by limited proteolysis, which removes 25 AA of net charge -6 from the center of the polypeptide chain. Additional processing also occurs at the N- and C-termini of the polypeptide. A two-chain active RIP (comprised of 16.5 and 8.5 kDa fragments that remain tightly associated) is produced from this processing event.

It carries out the reaction Endohydrolysis of the N-glycosidic bond at one specific adenosine on the 28S rRNA.. Functionally, potent catalytic inactivator of eukaryotic protein synthesis. It may be a component of natural defense mechanisms involved in protecting the kernel against soil-borne fungal infections. This is Ribosome-inactivating protein from Zea mays (Maize).